The following is a 396-amino-acid chain: Coiled-coil domain-containing protein 1 (396 aa).

The N-terminal stretch at 1–21 (MAARSALCFLAIITLFVYACG) is a signal peptide. Coiled-coil stretches lie at residues 53–73 (KIDS…NDRD), 109–129 (EVEK…DIID), 208–242 (DKES…ILDT), and 287–308 (YEEI…IDEH). Acidic residues predominate over residues 231 to 256 (DANDDVNDILDTDDEDEDEDVQEEKD). Disordered regions lie at residues 231–260 (DAND…EDIH) and 288–378 (EEIE…VADD).

In terms of tissue distribution, component of the acid-insoluble and acid-soluble organic matrix of calcified layers of the shell (at protein level).

It localises to the secreted. The sequence is that of Coiled-coil domain-containing protein 1 from Lottia gigantea (Giant owl limpet).